Here is a 216-residue protein sequence, read N- to C-terminus: Transmembrane protein 139 (216 aa).

The first 25 residues, 1–25 (MVPMHLLGRLEKPLLLLCCASFLLG), serve as a signal peptide directing secretion. Topologically, residues 26-34 (LALLGIKTD) are extracellular. The chain crosses the membrane as a helical span at residues 35 to 55 (ITPVAYFFLTLGGFFLFAYLL). Residues 56–216 (VRFLEWGLRS…VFYEDNWAPP (161 aa)) are Cytoplasmic-facing. The tract at residues 104–163 (RPQELDQPPPYSTVVIPPAPEEEQPSHPEGSRRAKLEQRRMASEGSMAQEGSPGRAPINL) is disordered. A compositionally biased stretch (basic and acidic residues) spans 127–145 (QPSHPEGSRRAKLEQRRMA). A phosphoserine mark is found at Ser146 and Ser155.

As to quaternary structure, interacts with isoform 2 of SLC4A1.

The protein resides in the membrane. In terms of biological role, may be involved in cellular trafficking of proteins such as SLC4A1. The polypeptide is Transmembrane protein 139 (TMEM139) (Homo sapiens (Human)).